The sequence spans 155 residues: Ribosomal RNA large subunit methyltransferase H (155 aa).

Residues L72, G103, and 122–127 (LSTLTL) contribute to the S-adenosyl-L-methionine site.

The protein belongs to the RNA methyltransferase RlmH family. As to quaternary structure, homodimer.

The protein resides in the cytoplasm. The enzyme catalyses pseudouridine(1915) in 23S rRNA + S-adenosyl-L-methionine = N(3)-methylpseudouridine(1915) in 23S rRNA + S-adenosyl-L-homocysteine + H(+). Specifically methylates the pseudouridine at position 1915 (m3Psi1915) in 23S rRNA. The protein is Ribosomal RNA large subunit methyltransferase H of Klebsiella pneumoniae (strain 342).